Reading from the N-terminus, the 132-residue chain is Small ribosomal subunit protein uS8 (132 aa).

This sequence belongs to the universal ribosomal protein uS8 family. As to quaternary structure, part of the 30S ribosomal subunit. Contacts proteins S5 and S12.

In terms of biological role, one of the primary rRNA binding proteins, it binds directly to 16S rRNA central domain where it helps coordinate assembly of the platform of the 30S subunit. This chain is Small ribosomal subunit protein uS8, found in Allorhizobium ampelinum (strain ATCC BAA-846 / DSM 112012 / S4) (Agrobacterium vitis (strain S4)).